Here is a 424-residue protein sequence, read N- to C-terminus: Serine--tRNA ligase (424 aa).

229 to 231 contributes to the L-serine binding site; it reads TAE. ATP is bound by residues 259 to 261 and Val275; that span reads RKE. L-serine is bound at residue Glu282. Position 349-352 (349-352) interacts with ATP; the sequence is EVTS. An L-serine-binding site is contributed by Thr383.

Belongs to the class-II aminoacyl-tRNA synthetase family. Type-1 seryl-tRNA synthetase subfamily. In terms of assembly, homodimer. The tRNA molecule binds across the dimer.

The protein localises to the cytoplasm. It catalyses the reaction tRNA(Ser) + L-serine + ATP = L-seryl-tRNA(Ser) + AMP + diphosphate + H(+). It carries out the reaction tRNA(Sec) + L-serine + ATP = L-seryl-tRNA(Sec) + AMP + diphosphate + H(+). The protein operates within aminoacyl-tRNA biosynthesis; selenocysteinyl-tRNA(Sec) biosynthesis; L-seryl-tRNA(Sec) from L-serine and tRNA(Sec): step 1/1. Catalyzes the attachment of serine to tRNA(Ser). Is also able to aminoacylate tRNA(Sec) with serine, to form the misacylated tRNA L-seryl-tRNA(Sec), which will be further converted into selenocysteinyl-tRNA(Sec). The chain is Serine--tRNA ligase from Borrelia recurrentis (strain A1).